We begin with the raw amino-acid sequence, 967 residues long: Nonsense-mediated mRNA decay factor SMG8 (967 aa).

Positions 627 to 702 (LNEGEDADAD…SCPESQSVAS (76 aa)) are disordered. A compositionally biased stretch (acidic residues) spans 628–639 (NEGEDADADADS). Positions 643–666 (RSQICSSGQSSRSRSNSSSSDTSS) are enriched in low complexity. Over residues 686–702 (ATEALSESCPESQSVAS) the composition is skewed to polar residues.

This sequence belongs to the SMG8 family.

Functionally, involved in nonsense-mediated decay (NMD) of mRNAs containing premature stop codons. Probable component of kinase complex containing nonC and recruited to stalled ribosomes. The chain is Nonsense-mediated mRNA decay factor SMG8 from Drosophila mojavensis (Fruit fly).